Reading from the N-terminus, the 62-residue chain is Large ribosomal subunit protein uL30 (62 aa).

This sequence belongs to the universal ribosomal protein uL30 family. In terms of assembly, part of the 50S ribosomal subunit.

This is Large ribosomal subunit protein uL30 from Pseudoalteromonas atlantica (strain T6c / ATCC BAA-1087).